Here is a 271-residue protein sequence, read N- to C-terminus: 2,3,4,5-tetrahydropyridine-2,6-dicarboxylate N-succinyltransferase (271 aa).

Residues Arg-102 and Asp-139 each coordinate substrate.

It belongs to the transferase hexapeptide repeat family. As to quaternary structure, homotrimer.

The protein resides in the cytoplasm. It carries out the reaction (S)-2,3,4,5-tetrahydrodipicolinate + succinyl-CoA + H2O = (S)-2-succinylamino-6-oxoheptanedioate + CoA. It functions in the pathway amino-acid biosynthesis; L-lysine biosynthesis via DAP pathway; LL-2,6-diaminopimelate from (S)-tetrahydrodipicolinate (succinylase route): step 1/3. The sequence is that of 2,3,4,5-tetrahydropyridine-2,6-dicarboxylate N-succinyltransferase from Coxiella burnetii (strain RSA 331 / Henzerling II).